The following is a 347-amino-acid chain: Selenide, water dikinase (347 aa).

Residue Cys-17 is part of the active site. ATP is bound by residues Lys-20 and 48 to 50 (TRD). Asp-51 lines the Mg(2+) pocket. ATP contacts are provided by residues Asp-68, Asp-91, and 139–141 (GHS). Asp-91 is a binding site for Mg(2+). Mg(2+) is bound at residue Asp-227.

Belongs to the selenophosphate synthase 1 family. Class I subfamily. Homodimer. Mg(2+) serves as cofactor.

It carries out the reaction hydrogenselenide + ATP + H2O = selenophosphate + AMP + phosphate + 2 H(+). In terms of biological role, synthesizes selenophosphate from selenide and ATP. This is Selenide, water dikinase from Escherichia coli O9:H4 (strain HS).